Reading from the N-terminus, the 43-residue chain is ORF7b protein (43 aa).

The helical transmembrane segment at 9-29 (FYLCFLAFLLFLVLIMLIIFW) threads the bilayer.

The protein localises to the host Golgi apparatus membrane. The protein resides in the host endosome membrane. The protein is ORF7b protein of Homo sapiens (Human).